A 446-amino-acid polypeptide reads, in one-letter code: tRNA modification GTPase MnmE (446 aa).

3 residues coordinate (6S)-5-formyl-5,6,7,8-tetrahydrofolate: R23, E81, and K120. In terms of domain architecture, TrmE-type G spans 216–370 (GFKVAIIGKP…LIKELELILD (155 aa)). N226 serves as a coordination point for K(+). GTP contacts are provided by residues 226–231 (NVGKSS), 245–251 (SDIAGTT), and 270–273 (DTAG). A Mg(2+)-binding site is contributed by S230. S245, I247, and T250 together coordinate K(+). T251 serves as a coordination point for Mg(2+). Position 446 (K446) interacts with (6S)-5-formyl-5,6,7,8-tetrahydrofolate.

Belongs to the TRAFAC class TrmE-Era-EngA-EngB-Septin-like GTPase superfamily. TrmE GTPase family. As to quaternary structure, homodimer. Heterotetramer of two MnmE and two MnmG subunits. It depends on K(+) as a cofactor.

Its subcellular location is the cytoplasm. Exhibits a very high intrinsic GTPase hydrolysis rate. Involved in the addition of a carboxymethylaminomethyl (cmnm) group at the wobble position (U34) of certain tRNAs, forming tRNA-cmnm(5)s(2)U34. The protein is tRNA modification GTPase MnmE of Aliarcobacter butzleri (strain RM4018) (Arcobacter butzleri).